Reading from the N-terminus, the 151-residue chain is Large ribosomal subunit protein bL9 (151 aa).

It belongs to the bacterial ribosomal protein bL9 family.

Binds to the 23S rRNA. The chain is Large ribosomal subunit protein bL9 from Lactobacillus delbrueckii subsp. bulgaricus (strain ATCC BAA-365 / Lb-18).